Consider the following 175-residue polypeptide: ATP synthase subunit b (175 aa).

Residues 19–35 (GLIFWTTVTFLIVLFIL) form a helical membrane-spanning segment.

Belongs to the ATPase B chain family. In terms of assembly, F-type ATPases have 2 components, F(1) - the catalytic core - and F(0) - the membrane proton channel. F(1) has five subunits: alpha(3), beta(3), gamma(1), delta(1), epsilon(1). F(0) has four main subunits: a(1), b(2) and c(10-14). The alpha and beta chains form an alternating ring which encloses part of the gamma chain. F(1) is attached to F(0) by a central stalk formed by the gamma and epsilon chains, while a peripheral stalk is formed by the delta and b chains.

It is found in the cell inner membrane. F(1)F(0) ATP synthase produces ATP from ADP in the presence of a proton or sodium gradient. F-type ATPases consist of two structural domains, F(1) containing the extramembraneous catalytic core and F(0) containing the membrane proton channel, linked together by a central stalk and a peripheral stalk. During catalysis, ATP synthesis in the catalytic domain of F(1) is coupled via a rotary mechanism of the central stalk subunits to proton translocation. Functionally, component of the F(0) channel, it forms part of the peripheral stalk, linking F(1) to F(0). The polypeptide is ATP synthase subunit b (Chlorobium phaeobacteroides (strain BS1)).